Reading from the N-terminus, the 173-residue chain is Archaemetzincin (173 aa).

His-130 is a binding site for Zn(2+). Glu-131 (proton acceptor) is an active-site residue. Zn(2+) is bound by residues His-134, His-140, Cys-141, Cys-146, Cys-165, and Cys-168.

It belongs to the peptidase M54 family. Monomer. It depends on Zn(2+) as a cofactor.

Probable zinc metalloprotease whose natural substrate is unknown. This Haloarcula marismortui (strain ATCC 43049 / DSM 3752 / JCM 8966 / VKM B-1809) (Halobacterium marismortui) protein is Archaemetzincin.